A 309-amino-acid polypeptide reads, in one-letter code: Protein FdhE (309 aa).

The protein belongs to the FdhE family.

It localises to the cytoplasm. Necessary for formate dehydrogenase activity. The sequence is that of Protein FdhE from Escherichia coli (strain SMS-3-5 / SECEC).